Reading from the N-terminus, the 224-residue chain is V-type ATP synthase subunit D (224 aa).

The disordered stretch occupies residues 190–224; sequence REAGYTQKKIKAKIEGKNKEAREAAAATSHGSAAD. A compositionally biased stretch (basic and acidic residues) spans 201–212; it reads AKIEGKNKEARE. The span at 213-224 shows a compositional bias: low complexity; that stretch reads AAAATSHGSAAD.

It belongs to the V-ATPase D subunit family.

Functionally, produces ATP from ADP in the presence of a proton gradient across the membrane. This chain is V-type ATP synthase subunit D (atpD), found in Deinococcus radiodurans (strain ATCC 13939 / DSM 20539 / JCM 16871 / CCUG 27074 / LMG 4051 / NBRC 15346 / NCIMB 9279 / VKM B-1422 / R1).